The primary structure comprises 204 residues: Large ribosomal subunit protein eL15y (204 aa).

The protein belongs to the eukaryotic ribosomal protein eL15 family.

The polypeptide is Large ribosomal subunit protein eL15y (SB62) (Picea mariana (Black spruce)).